We begin with the raw amino-acid sequence, 361 residues long: NAD(P)H-quinone oxidoreductase subunit 1, chloroplastic (361 aa).

The next 6 membrane-spanning stretches (helical) occupy residues Ile25–Ile45, Val102–Leu122, Leu125–Met145, Tyr246–Ser266, Val298–Ile318, and Leu334–Thr354.

It belongs to the complex I subunit 1 family. As to quaternary structure, NDH is composed of at least 16 different subunits, 5 of which are encoded in the nucleus.

Its subcellular location is the plastid. It is found in the chloroplast thylakoid membrane. It catalyses the reaction a plastoquinone + NADH + (n+1) H(+)(in) = a plastoquinol + NAD(+) + n H(+)(out). The catalysed reaction is a plastoquinone + NADPH + (n+1) H(+)(in) = a plastoquinol + NADP(+) + n H(+)(out). Its function is as follows. NDH shuttles electrons from NAD(P)H:plastoquinone, via FMN and iron-sulfur (Fe-S) centers, to quinones in the photosynthetic chain and possibly in a chloroplast respiratory chain. The immediate electron acceptor for the enzyme in this species is believed to be plastoquinone. Couples the redox reaction to proton translocation, and thus conserves the redox energy in a proton gradient. This is NAD(P)H-quinone oxidoreductase subunit 1, chloroplastic from Nymphaea alba (White water-lily).